Consider the following 717-residue polypeptide: Eukaryotic translation initiation factor 3 subunit B (717 aa).

A sufficient for interaction with HCR1 and TIF32 region spans residues 1 to 89; it reads MTVEDNLDID…VFIEYETGEM (89 aa). The segment at 1 to 216 is sufficient for interaction with PIC8; the sequence is MTVEDNLDID…GVQLWGGPDW (216 aa). The RRM domain occupies 28 to 115; that stretch reads SFIVVDGAPV…HKLLVNKLSE (88 aa). WD repeat units follow at residues 183–221, 223–284, 293–332, 445–484, 506–549, and 564–609; these read RERWTETQVYWSPTGTYLVSTHTQGVQLWGGPDWAPPIC, FQHP…PVRT, GASMSWPILKFSPDDKYAARMIPGEQLSIYETETMSLLDK, ELKDTVTNMAWEPHGDRFVTISNSDSTTNYDGPLPANRHT, FDKK…DRKH, and SEHY…QREE.

This sequence belongs to the eIF-3 subunit B family. Component of the eukaryotic translation initiation factor 3 (eIF-3) complex.

The protein resides in the cytoplasm. Its function is as follows. RNA-binding component of the eukaryotic translation initiation factor 3 (eIF-3) complex, which is involved in protein synthesis of a specialized repertoire of mRNAs and, together with other initiation factors, stimulates binding of mRNA and methionyl-tRNAi to the 40S ribosome. The eIF-3 complex specifically targets and initiates translation of a subset of mRNAs involved in cell proliferation. The protein is Eukaryotic translation initiation factor 3 subunit B of Yarrowia lipolytica (strain CLIB 122 / E 150) (Yeast).